We begin with the raw amino-acid sequence, 174 residues long: Adenine phosphoribosyltransferase (174 aa).

This sequence belongs to the purine/pyrimidine phosphoribosyltransferase family. As to quaternary structure, homodimer.

The protein resides in the cytoplasm. The enzyme catalyses AMP + diphosphate = 5-phospho-alpha-D-ribose 1-diphosphate + adenine. It functions in the pathway purine metabolism; AMP biosynthesis via salvage pathway; AMP from adenine: step 1/1. Catalyzes a salvage reaction resulting in the formation of AMP, that is energically less costly than de novo synthesis. The protein is Adenine phosphoribosyltransferase of Nitrosomonas europaea (strain ATCC 19718 / CIP 103999 / KCTC 2705 / NBRC 14298).